Reading from the N-terminus, the 370-residue chain is 2-Hydroxyacid oxidase 1 (370 aa).

The FMN hydroxy acid dehydrogenase domain maps to 1-365 (MLPRLICIND…DKTLVRKNPL (365 aa)). Residue tyrosine 26 participates in glyoxylate binding. Residues 79-81 (ATA), serine 108, and glutamine 130 each bind FMN. Tyrosine 132 is a glyoxylate binding site. Threonine 158 serves as a coordination point for FMN. Arginine 167 provides a ligand contact to glyoxylate. Lysine 184 is subject to N6-succinyllysine. Serine 194 and serine 230 each carry phosphoserine. Residues lysine 236 and serine 258 each coordinate FMN. Residues histidine 260 and arginine 263 each coordinate glyoxylate. Histidine 260 serves as the catalytic Proton acceptor. FMN contacts are provided by residues 291–295 (DGGVR) and 314–315 (GR). The Microbody targeting signal signature appears at 368–370 (SKI).

This sequence belongs to the FMN-dependent alpha-hydroxy acid dehydrogenase family. In terms of assembly, homotetramer. Requires FMN as cofactor. Highly expressed in liver.

It is found in the peroxisome matrix. It carries out the reaction a (2S)-2-hydroxycarboxylate + O2 = a 2-oxocarboxylate + H2O2. The enzyme catalyses glycolate + O2 = glyoxylate + H2O2. It catalyses the reaction glyoxylate + O2 + H2O = oxalate + H2O2 + H(+). The catalysed reaction is 2-hydroxyhexadecanoate + O2 = 2-oxohexadecanoate + H2O2. It carries out the reaction 2-hydroxyoctanoate + O2 = 2-oxooctanoate + H2O2. It functions in the pathway amino-acid biosynthesis; glycine biosynthesis. With respect to regulation, inhibited by its product oxalate. Inhibited by high concentrations of dichlorophenolindophenol (DCIP) in vitro. Broad substrate specificity (S)-2-hydroxy-acid oxidase that preferentially oxidizes glycolate. The glyoxylate produced by the oxidation of glycolate can then be utilized by alanine-glyoxylate aminotransferase for the peroxisomal synthesis of glycine; this pathway appears to be an important step for the detoxification of glyoxylate which, if allowed to accumulate, may be metabolized to oxalate with formation of kidney stones. Can also catalyze the oxidation of glyoxylate, and long chain hydroxyacids such as 2-hydroxyhexadecanoate and 2-hydroxyoctanoate, albeit with much lower catalytic efficiency. Active in vitro with the artificial electron acceptor 2,6-dichlorophenolindophenol (DCIP), but O2 is believed to be the physiological electron acceptor, leading to the production of H2O2. Is not active on L-lactate and 2-hydroxybutanoate. The sequence is that of 2-Hydroxyacid oxidase 1 from Homo sapiens (Human).